Here is a 222-residue protein sequence, read N- to C-terminus: Cyclin-U2-1 (222 aa).

This sequence belongs to the cyclin family. Cyclin U/P subfamily. As to quaternary structure, interacts with CDKA-1. As to expression, expressed in roots, stems and flowers. Expressed in the shoot apex, leaf primordia and young leaves.

The chain is Cyclin-U2-1 (CYCU2-1) from Arabidopsis thaliana (Mouse-ear cress).